A 906-amino-acid polypeptide reads, in one-letter code: Protein translocase subunit SecA (906 aa).

ATP contacts are provided by residues glutamine 86, 104–108 (GEGKT), and aspartate 511. 2 stretches are compositionally biased toward basic and acidic residues: residues 853 to 865 (HESV…RHDE) and 877 to 888 (VRREGPKVKRND). Positions 853–906 (HESVIDNNQRHDEDEQEEAPKVQQVRREGPKVKRNDPCPCGSGKKYKQCHGKVE) are disordered. The Zn(2+) site is built by cysteine 890, cysteine 892, cysteine 901, and histidine 902. Residues 896–906 (KKYKQCHGKVE) show a composition bias toward basic residues.

The protein belongs to the SecA family. As to quaternary structure, monomer and homodimer. Part of the essential Sec protein translocation apparatus which comprises SecA, SecYEG and auxiliary proteins SecDF-YajC and YidC. It depends on Zn(2+) as a cofactor.

The protein resides in the cell inner membrane. The protein localises to the cytoplasm. The enzyme catalyses ATP + H2O + cellular proteinSide 1 = ADP + phosphate + cellular proteinSide 2.. Its function is as follows. Part of the Sec protein translocase complex. Interacts with the SecYEG preprotein conducting channel. Has a central role in coupling the hydrolysis of ATP to the transfer of proteins into and across the cell membrane, serving both as a receptor for the preprotein-SecB complex and as an ATP-driven molecular motor driving the stepwise translocation of polypeptide chains across the membrane. This chain is Protein translocase subunit SecA, found in Francisella tularensis subsp. holarctica (strain OSU18).